The primary structure comprises 180 residues: Der GTPase-activating protein YihI (180 aa).

A compositionally biased stretch (polar residues) spans 1–10 (MKQPARTSQV). Disordered regions lie at residues 1 to 102 (MKQP…PRLT) and 158 to 180 (DAEDEKAEEDMYRLLKGSHRTPE). Basic and acidic residues predominate over residues 21–32 (TREEINQEARDR). The segment covering 45 to 54 (SRANPATVSQ) has biased composition (polar residues). Over residues 55-67 (KGDKSQSVKDPRI) the composition is skewed to basic and acidic residues. Low complexity predominate over residues 84 to 93 (PANPVKAAKP).

The protein belongs to the YihI family. As to quaternary structure, interacts with Der.

A GTPase-activating protein (GAP) that modifies Der/EngA GTPase function. May play a role in ribosome biogenesis. This Erwinia tasmaniensis (strain DSM 17950 / CFBP 7177 / CIP 109463 / NCPPB 4357 / Et1/99) protein is Der GTPase-activating protein YihI.